A 197-amino-acid chain; its full sequence is Ribonuclease HII (197 aa).

In terms of domain architecture, RNase H type-2 spans 11-197 (HLIAGVDEVG…FAPVKKILGL (187 aa)). A divalent metal cation contacts are provided by aspartate 17, glutamate 18, and aspartate 109.

Belongs to the RNase HII family. Requires Mn(2+) as cofactor. The cofactor is Mg(2+).

The protein resides in the cytoplasm. The catalysed reaction is Endonucleolytic cleavage to 5'-phosphomonoester.. Endonuclease that specifically degrades the RNA of RNA-DNA hybrids. This chain is Ribonuclease HII, found in Actinobacillus pleuropneumoniae serotype 7 (strain AP76).